Consider the following 155-residue polypeptide: Large ribosomal subunit protein uL22c (155 aa).

The protein belongs to the universal ribosomal protein uL22 family. In terms of assembly, part of the 50S ribosomal subunit.

It is found in the plastid. The protein resides in the chloroplast. This protein binds specifically to 23S rRNA. Its function is as follows. The globular domain of the protein is located near the polypeptide exit tunnel on the outside of the subunit, while an extended beta-hairpin is found that lines the wall of the exit tunnel in the center of the 70S ribosome. The protein is Large ribosomal subunit protein uL22c (rpl22) of Nicotiana sylvestris (Wood tobacco).